Here is a 508-residue protein sequence, read N- to C-terminus: Mu-like prophage FluMu protein gp28 (508 aa).

It to phage Mu protein gp28.

This chain is Mu-like prophage FluMu protein gp28, found in Haemophilus influenzae (strain ATCC 51907 / DSM 11121 / KW20 / Rd).